The chain runs to 303 residues: MRARPLSAHLKALEAESMHIMREVAAEFDNPVMLYSIGKDSAVMLHLALKAFYPSRPPFPLQHVDSTFKFKEMITFRDAIAEELGLEIRVEINEDGRARGINPFDHGSQLHTQVMKTEALRSAMTRHKYDAAFGGARRDEEKSRAKERIFSFRDTNHGWDPKNQRPELWSNYNTKIKQGESIRVFPLSNWTELDIWQYILEEDIPIVPLYYAAHRPVVERDGQLIMVDDERLPMKDGEKPDLKLVRFRTLGCYPLTGAIESSAQTLEEIVLEMLTARTSERSGRLIDHDESGSMEKKKREGYF.

Residues 282–303 (SGRLIDHDESGSMEKKKREGYF) form a disordered region.

This sequence belongs to the PAPS reductase family. CysD subfamily. Heterodimer composed of CysD, the smaller subunit, and CysN.

It carries out the reaction sulfate + ATP + H(+) = adenosine 5'-phosphosulfate + diphosphate. The protein operates within sulfur metabolism; hydrogen sulfide biosynthesis; sulfite from sulfate: step 1/3. Functionally, with CysN forms the ATP sulfurylase (ATPS) that catalyzes the adenylation of sulfate producing adenosine 5'-phosphosulfate (APS) and diphosphate, the first enzymatic step in sulfur assimilation pathway. APS synthesis involves the formation of a high-energy phosphoric-sulfuric acid anhydride bond driven by GTP hydrolysis by CysN coupled to ATP hydrolysis by CysD. This is Sulfate adenylyltransferase subunit 2 from Maricaulis maris (strain MCS10) (Caulobacter maris).